The sequence spans 206 residues: LexA repressor (206 aa).

Positions 28-48 form a DNA-binding region, H-T-H motif; that stretch reads RAEIARRLGFKSANAAEEHLK. Residues serine 123 and lysine 160 each act as for autocatalytic cleavage activity in the active site.

It belongs to the peptidase S24 family. Homodimer.

It carries out the reaction Hydrolysis of Ala-|-Gly bond in repressor LexA.. Represses a number of genes involved in the response to DNA damage (SOS response), including recA and lexA. In the presence of single-stranded DNA, RecA interacts with LexA causing an autocatalytic cleavage which disrupts the DNA-binding part of LexA, leading to derepression of the SOS regulon and eventually DNA repair. The sequence is that of LexA repressor from Shewanella halifaxensis (strain HAW-EB4).